A 590-amino-acid polypeptide reads, in one-letter code: Zinc finger protein 285 (590 aa).

The KRAB domain maps to 8–86 (VTFKDVAVVF…WKQRIRDLTV (79 aa)). The segment at 232-254 (FPCNNCGVAFADDTDPHVHHSTH) adopts a C2H2-type 1 zinc-finger fold. The segment at 260–282 (YKCDQYGKNFSQSQDLIVHCKTH) adopts a C2H2-type 2; degenerate zinc-finger fold. C2H2-type zinc fingers lie at residues 316–338 (YKCK…HRVH), 344–366 (YKCD…QGVH), 372–394 (YKCE…QRVH), 400–422 (YKCS…WRFH), 428–450 (YRCG…QRVH), 456–478 (YKCN…QRVH), 484–506 (YKCE…QRDH), 512–534 (YKCD…LRVH), and 540–562 (YKCK…QRVH).

It belongs to the krueppel C2H2-type zinc-finger protein family.

Its subcellular location is the nucleus. Its function is as follows. May be involved in transcriptional regulation. This chain is Zinc finger protein 285 (ZNF285), found in Homo sapiens (Human).